A 360-amino-acid chain; its full sequence is Putative transport protein BU123 (360 aa).

9 helical membrane-spanning segments follow: residues 18-38 (IFIV…ILGF), 39-59 (FWAS…QKIL), 66-86 (AVII…FFLV), 161-181 (GLFI…YWNG), 204-224 (LLLA…TALI), 230-250 (GIGL…IIFF), 251-271 (SCLI…WLYW), 280-300 (ILLI…PFFI), and 316-336 (IGGL…VLVI).

This sequence belongs to the autoinducer-2 exporter (AI-2E) (TC 2.A.86) family.

It localises to the cell membrane. This chain is Putative transport protein BU123, found in Buchnera aphidicola subsp. Acyrthosiphon pisum (strain APS) (Acyrthosiphon pisum symbiotic bacterium).